The primary structure comprises 344 residues: L-threonine 3-dehydrogenase (344 aa).

Residue Cys42 coordinates Zn(2+). Active-site charge relay system residues include Thr44 and His47. His67, Glu68, Cys97, Cys100, Cys103, and Cys111 together coordinate Zn(2+). NAD(+) contacts are provided by residues Ile179, Asp199, Arg204, 266-268, and 290-291; these read LGI and IY.

Belongs to the zinc-containing alcohol dehydrogenase family. As to quaternary structure, homotetramer. Requires Zn(2+) as cofactor.

Its subcellular location is the cytoplasm. It carries out the reaction L-threonine + NAD(+) = (2S)-2-amino-3-oxobutanoate + NADH + H(+). The protein operates within amino-acid degradation; L-threonine degradation via oxydo-reductase pathway; glycine from L-threonine: step 1/2. Its function is as follows. Catalyzes the NAD(+)-dependent oxidation of L-threonine to 2-amino-3-ketobutyrate. This is L-threonine 3-dehydrogenase from Mesorhizobium japonicum (strain LMG 29417 / CECT 9101 / MAFF 303099) (Mesorhizobium loti (strain MAFF 303099)).